A 252-amino-acid chain; its full sequence is Phosphate import ATP-binding protein PstB 1 (252 aa).

One can recognise an ABC transporter domain in the interval 6 to 247 (LQVSDLSVYY…PKHKETEDYI (242 aa)). 38 to 45 (GPSGSGKS) is a binding site for ATP.

The protein belongs to the ABC transporter superfamily. Phosphate importer (TC 3.A.1.7) family. As to quaternary structure, the complex is composed of two ATP-binding proteins (PstB), two transmembrane proteins (PstC and PstA) and a solute-binding protein (PstS).

It is found in the cell membrane. The enzyme catalyses phosphate(out) + ATP + H2O = ADP + 2 phosphate(in) + H(+). Its function is as follows. Part of the ABC transporter complex PstSACB involved in phosphate import. Responsible for energy coupling to the transport system. The chain is Phosphate import ATP-binding protein PstB 1 from Streptococcus agalactiae serotype Ia (strain ATCC 27591 / A909 / CDC SS700).